Consider the following 375-residue polypeptide: Protein SSUH2 homolog (375 aa).

As to expression, expressed in enterocytes of small and large intestinal mucosa (at protein level). Expressed in chromaffine and interstitial cells. Expressed in peripheral blood and gingival cells.

Its subcellular location is the cytoplasm. The protein resides in the nucleus. In terms of biological role, plays a role in odontogenesis. This is Protein SSUH2 homolog from Homo sapiens (Human).